Reading from the N-terminus, the 328-residue chain is Protein chibby homolog 2 (328 aa).

Residues 180–231 (NKGASSVQKDTENTTAAGEGSLGPTCQEEHDAKEESTTPTQNDTKIAPSTED) form a disordered region. Polar residues predominate over residues 182–195 (GASSVQKDTENTTA). Residues 206-215 (QEEHDAKEES) show a composition bias toward basic and acidic residues. The stretch at 259–307 (RESLHALQDESKFFQEEYKKLKLQLNNVKNTVSDITTQMEMLEKELIAI) forms a coiled coil.

This sequence belongs to the chibby family. SPERT subfamily.

The protein is Protein chibby homolog 2 (CBY2) of Gallus gallus (Chicken).